Here is a 192-residue protein sequence, read N- to C-terminus: Xanthine phosphoribosyltransferase (192 aa).

Xanthine contacts are provided by Leu-20 and Asn-27. 128-132 lines the 5-phospho-alpha-D-ribose 1-diphosphate pocket; the sequence is ANGDA. Residue Lys-156 participates in xanthine binding.

The protein belongs to the purine/pyrimidine phosphoribosyltransferase family. Xpt subfamily. In terms of assembly, homodimer.

Its subcellular location is the cytoplasm. It catalyses the reaction XMP + diphosphate = xanthine + 5-phospho-alpha-D-ribose 1-diphosphate. It functions in the pathway purine metabolism; XMP biosynthesis via salvage pathway; XMP from xanthine: step 1/1. Its function is as follows. Converts the preformed base xanthine, a product of nucleic acid breakdown, to xanthosine 5'-monophosphate (XMP), so it can be reused for RNA or DNA synthesis. The chain is Xanthine phosphoribosyltransferase from Staphylococcus epidermidis (strain ATCC 35984 / DSM 28319 / BCRC 17069 / CCUG 31568 / BM 3577 / RP62A).